A 333-amino-acid chain; its full sequence is Adenosine deaminase (333 aa).

Zn(2+) is bound by residues His12 and His14. Substrate contacts are provided by His14, Asp16, and Gly170. Zn(2+) is bound at residue His197. The active-site Proton donor is the Glu200. Asp278 contacts Zn(2+). A substrate-binding site is contributed by Asp279.

It belongs to the metallo-dependent hydrolases superfamily. Adenosine and AMP deaminases family. Adenosine deaminase subfamily. It depends on Zn(2+) as a cofactor.

It carries out the reaction adenosine + H2O + H(+) = inosine + NH4(+). It catalyses the reaction 2'-deoxyadenosine + H2O + H(+) = 2'-deoxyinosine + NH4(+). Catalyzes the hydrolytic deamination of adenosine and 2-deoxyadenosine. This is Adenosine deaminase from Edwardsiella ictaluri (strain 93-146).